Reading from the N-terminus, the 146-residue chain is Inner membrane protein YdgK (146 aa).

At methionine 1–tryptophan 12 the chain is on the cytoplasmic side. A helical membrane pass occupies residues leucine 13 to leucine 33. Residues tyrosine 34–glycine 59 are Periplasmic-facing. Residues valine 60–phenylalanine 80 traverse the membrane as a helical segment. At lysine 81–histidine 89 the chain is on the cytoplasmic side. Residues tyrosine 90 to valine 110 form a helical membrane-spanning segment. At glutamate 111 to aspartate 112 the chain is on the periplasmic side. The chain crosses the membrane as a helical span at residues glycine 113 to phenylalanine 133. The Cytoplasmic segment spans residues lysine 134–proline 146.

This sequence to Synechocystis PCC 6803 sll0481.

It localises to the cell inner membrane. This Escherichia coli (strain K12) protein is Inner membrane protein YdgK (ydgK).